The sequence spans 150 residues: Snaclec bothrojaracin subunit beta (150 aa).

A signal peptide spans 1-23 (MGRFIFVSFGLLVVFLSLSGTAA). Disulfide bonds link Cys-25/Cys-36, Cys-53/Cys-146, and Cys-123/Cys-138. Residues 32 to 147 (YEGSCYRVFE…CTKLEYFVCE (116 aa)) enclose the C-type lectin domain.

Belongs to the snaclec family. As to quaternary structure, heterodimer of subunits alpha and beta; disulfide-linked. In terms of tissue distribution, expressed by the venom gland.

The protein localises to the secreted. Functionally, this potent antithrombotic agent acts in a calcium-independent manner. Exerts its anticoagulant effect by two distinct mechanisms. It binds to activated thrombin through exosite 1, blocking fibrinogen clotting, platelet activation, factor V activation and other effects, and it interacts with prothrombin (F2), decreasing its proteolytic activation -especially in the presence of factor Va. In vivo, intravenous injection before thrombosis induction causes a significant decrease in thrombus weight. Furthermore, BJC shows a prolonged effect by remaining in the plasma bound to prothrombin for at least 12 hours. In Bothrops jararaca (Jararaca), this protein is Snaclec bothrojaracin subunit beta.